Here is a 742-residue protein sequence, read N- to C-terminus: Tegument protein UL47 (742 aa).

A compositionally biased stretch (basic and acidic residues) spans 1 to 10; sequence MDAARDGRPE. Disordered regions lie at residues 1 to 128 and 155 to 199; these read MDAA…TAHL and EFPP…DDAA. The Nuclear localization signal motif lies at 10-30; it reads ERRPRRSGTYRTHPFQRPSAR. Low complexity predominate over residues 18–37; it reads TYRTHPFQRPSARRSLLDAL. Residues 38 to 62 are compositionally biased toward basic and acidic residues; it reads RAADAEAAERPRVRRPRPDFQRPPD. Residues 63-88 are compositionally biased toward acidic residues; it reads EDTSEDENVYDYIDGDSSDSADDYDS. The short motif at 95 to 122 is the Nuclear export signal element; sequence RGPNHGAGDAMDTDAPPERAPEGGAPQD. A Nuclear export signal motif is present at residues 485-495; sequence LSAYLTLFVAL.

The protein belongs to the alphaherpesvirinae HHV-1 UL47 family. In terms of assembly, interacts with US3 kinase. Interacts with UL31 and UL34; these interactions seem important for efficient virion nuclear egress. Interacts with UL41/VHS. In terms of processing, phosphorylated by US3. This phosphorylation is required for proper nuclear localization.

It is found in the virion tegument. It localises to the host nucleus. The protein resides in the host cytoplasm. Functionally, tegument protein that can bind to various RNA transcripts. Plays a role in the attenuation of selective viral and cellular mRNA degradation by modulating the activity of host shutoff RNase UL41/VHS. Also plays a role in the primary envelopment of virions in the perinuclear space, probably by interacting with two nuclear egress proteins UL31 and UL34. In Bos taurus (Bovine), this protein is Tegument protein UL47.